We begin with the raw amino-acid sequence, 430 residues long: Phosphoserine aminotransferase 1, chloroplastic (430 aa).

Residues 1–51 constitute a chloroplast transit peptide; the sequence is MAATTNSFLVGSNNTQIPALKPKSSSQSFLHLSKPNTVNFVSKTKPVAVRC. Valine 52 is modified (N-acetylvaline). Residue arginine 111 coordinates L-glutamate. Residues 145-146, tryptophan 171, threonine 221, aspartate 241, and glutamine 264 each bind pyridoxal 5'-phosphate; that span reads AT. N6-(pyridoxal phosphate)lysine is present on lysine 265. Position 306-307 (306-307) interacts with pyridoxal 5'-phosphate; the sequence is NT.

Belongs to the class-V pyridoxal-phosphate-dependent aminotransferase family. SerC subfamily. In terms of assembly, homodimer. Requires pyridoxal 5'-phosphate as cofactor. As to expression, ubiquitous, but expressed preferentially in light-grown roots and shoots. Detected in root meristems and in root tissues surrounding the vascular bundle.

The protein localises to the plastid. The protein resides in the chloroplast. The enzyme catalyses O-phospho-L-serine + 2-oxoglutarate = 3-phosphooxypyruvate + L-glutamate. It catalyses the reaction 4-(phosphooxy)-L-threonine + 2-oxoglutarate = (R)-3-hydroxy-2-oxo-4-phosphooxybutanoate + L-glutamate. The protein operates within amino-acid biosynthesis; L-serine biosynthesis; L-serine from 3-phospho-D-glycerate: step 2/3. Its pathway is cofactor biosynthesis; pyridoxine 5'-phosphate biosynthesis; pyridoxine 5'-phosphate from D-erythrose 4-phosphate: step 3/5. Its activity is regulated as follows. Inhibited by high concentration of cysteine and by 3-phosphonooxypyruvate. Not inhibited by serine, threonine, valine, glycine, tryptophan and O-acetyl-L-serine. Its function is as follows. Involved in the plastidial phosphorylated pathway of serine biosynthesis (PPSB). Catalyzes the reversible conversion of 3-phosphohydroxypyruvate to phosphoserine. The protein is Phosphoserine aminotransferase 1, chloroplastic of Arabidopsis thaliana (Mouse-ear cress).